Here is a 1049-residue protein sequence, read N- to C-terminus: RIMS-binding protein 2 (1049 aa).

An SH3 1 domain is found at 164–231; sequence GKVHLCVARY…PSNFVDFIQD (68 aa). Fibronectin type-III domains lie at 294–387, 390–471, and 486–587; these read VPYP…GKDV, APSQ…EKDE, and PPQD…VPPA. 3 disordered regions span residues 580–664, 694–714, and 728–750; these read PDLL…VSTT, SAGPYANSDEEDGYASPEVKR, and LGQQPHCCHGDEYHTESSRGSDL. The segment covering 582 to 598 has biased composition (pro residues); that stretch reads LLVPPAPHPRTAPPPKP. The span at 603-616 shows a compositional bias: basic and acidic residues; the sequence is MDTKDLGPHVKVDE. Positions 641-651 are enriched in low complexity; it reads GPGRRSPSPSR. Phosphoserine occurs at positions 701 and 709. Positions 735–746 are enriched in basic and acidic residues; the sequence is CHGDEYHTESSR. 2 positions are modified to phosphoserine: S832 and S839. At T841 the chain carries Phosphothreonine. SH3 domains lie at 848 to 916 and 952 to 1019; these read LPAR…EIHA and VPTR…EVPD. The interval 1024 to 1049 is disordered; the sequence is HLSDAPPHYSHDPPMRTKAKRVSQPP. Basic residues predominate over residues 1040 to 1049; it reads TKAKRVSQPP.

Belongs to the RIMBP family. In terms of assembly, interacts with CACNA1D and CACNA1B, and potentially with other Ca(2+) channel alpha-1 isoforms. Interacts with RIMS1 and RIMS2.

It is found in the cell membrane. The protein resides in the synapse. In terms of biological role, plays a role in the synaptic transmission as bifunctional linker that interacts simultaneously with RIMS1, RIMS2, CACNA1D and CACNA1B. The polypeptide is RIMS-binding protein 2 (Rimbp2) (Rattus norvegicus (Rat)).